Consider the following 162-residue polypeptide: Protein mmf1, mitochondrial (162 aa).

This sequence belongs to the RutC family.

It localises to the mitochondrion. The protein localises to the cytoplasm. Plays a role in the maintenance of mitochondrial DNA. The polypeptide is Protein mmf1, mitochondrial (mmf1) (Schizosaccharomyces pombe (strain 972 / ATCC 24843) (Fission yeast)).